Reading from the N-terminus, the 304-residue chain is Acetyl-coenzyme A carboxylase carboxyl transferase subunit beta (304 aa).

The CoA carboxyltransferase N-terminal domain maps to 25–294 (LWIKCPETGE…KAVKRDTATE (270 aa)).

The protein belongs to the AccD/PCCB family. In terms of assembly, acetyl-CoA carboxylase is a heterohexamer composed of biotin carboxyl carrier protein (AccB), biotin carboxylase (AccC) and two subunits each of ACCase subunit alpha (AccA) and ACCase subunit beta (AccD).

It is found in the cytoplasm. The catalysed reaction is N(6)-carboxybiotinyl-L-lysyl-[protein] + acetyl-CoA = N(6)-biotinyl-L-lysyl-[protein] + malonyl-CoA. The protein operates within lipid metabolism; malonyl-CoA biosynthesis; malonyl-CoA from acetyl-CoA: step 1/1. Component of the acetyl coenzyme A carboxylase (ACC) complex. Biotin carboxylase (BC) catalyzes the carboxylation of biotin on its carrier protein (BCCP) and then the CO(2) group is transferred by the transcarboxylase to acetyl-CoA to form malonyl-CoA. In Rhizobium meliloti (strain 1021) (Ensifer meliloti), this protein is Acetyl-coenzyme A carboxylase carboxyl transferase subunit beta.